Here is a 679-residue protein sequence, read N- to C-terminus: tRNA uridine 5-carboxymethylaminomethyl modification enzyme MnmG (679 aa).

Position 13-18 (13-18 (GGGHAG)) interacts with FAD. NAD(+) is bound at residue 280 to 294 (GPRYCPSVEDKINRF).

It belongs to the MnmG family. As to quaternary structure, homodimer. Heterotetramer of two MnmE and two MnmG subunits. FAD serves as cofactor.

It is found in the cytoplasm. NAD-binding protein involved in the addition of a carboxymethylaminomethyl (cmnm) group at the wobble position (U34) of certain tRNAs, forming tRNA-cmnm(5)s(2)U34. The sequence is that of tRNA uridine 5-carboxymethylaminomethyl modification enzyme MnmG from Albidiferax ferrireducens (strain ATCC BAA-621 / DSM 15236 / T118) (Rhodoferax ferrireducens).